The sequence spans 396 residues: Elongation factor Tu (396 aa).

In terms of domain architecture, tr-type G spans 10–205 (KSHANIGTIG…AVDEYIPTPE (196 aa)). Residues 19–26 (GHVDHGKT) form a G1 region. GTP is bound at residue 19–26 (GHVDHGKT). Thr-26 provides a ligand contact to Mg(2+). The segment at 61–65 (GITIS) is G2. Residues 82–85 (DCPG) are G3. GTP is bound by residues 82 to 86 (DCPGH) and 137 to 140 (NKCD). The interval 137-140 (NKCD) is G4. The segment at 175–177 (SAL) is G5.

Belongs to the TRAFAC class translation factor GTPase superfamily. Classic translation factor GTPase family. EF-Tu/EF-1A subfamily. As to quaternary structure, monomer.

The protein localises to the cytoplasm. The catalysed reaction is GTP + H2O = GDP + phosphate + H(+). GTP hydrolase that promotes the GTP-dependent binding of aminoacyl-tRNA to the A-site of ribosomes during protein biosynthesis. The chain is Elongation factor Tu from Bacillus pumilus (strain SAFR-032).